We begin with the raw amino-acid sequence, 362 residues long: MKGLILVGGYGTRLRPLTLTLPKPLVEFGNRPMILHQIEALAKAGVTDIVLAVNYRPEVMVSTLKKYEAEYGVTITFSVEEEPLGTAGPLKLAEKVLKKDDTPIFVLNSDVICDYPFQELADFHKTSGGKATIVATKVDEPSKYGVIVHDRDTPNLIDRFVEKPVEFVGNRINAGLYILNPSVIDLIEMKPTSIEKETFPILVENKELYSFDLEGYWMDVGQPKDFLSGTVLYLTALSKKEPKKLCNEKFIHGGNVLVDPSAKIHPSALIGPNVVIGPNVVVGEGARIQRSVLLSNSEVKDHAWVKSTIVGWNSRIGKWARTDGITVLGDDVEIKNEVYVNGAKVLPHKSISSNVEHEAIIM.

Belongs to the transferase hexapeptide repeat family.

It localises to the cytoplasm. The enzyme catalyses alpha-D-mannose 1-phosphate + GTP + H(+) = GDP-alpha-D-mannose + diphosphate. It functions in the pathway nucleotide-sugar biosynthesis; GDP-alpha-D-mannose biosynthesis; GDP-alpha-D-mannose from alpha-D-mannose 1-phosphate (GTP route): step 1/1. Involved in cell wall synthesis where it is required for glycosylation. Involved in cell cycle progression through cell-size checkpoint. This is Mannose-1-phosphate guanyltransferase (MPG1) from Debaryomyces hansenii (strain ATCC 36239 / CBS 767 / BCRC 21394 / JCM 1990 / NBRC 0083 / IGC 2968) (Yeast).